Consider the following 396-residue polypeptide: Ribosomal RNA large subunit methyltransferase I (396 aa).

Positions 2-79 (SVRLVLAKGR…QAESIDIAFF (78 aa)) constitute a PUA domain.

The protein belongs to the methyltransferase superfamily. RlmI family.

The protein localises to the cytoplasm. The catalysed reaction is cytidine(1962) in 23S rRNA + S-adenosyl-L-methionine = 5-methylcytidine(1962) in 23S rRNA + S-adenosyl-L-homocysteine + H(+). Its function is as follows. Specifically methylates the cytosine at position 1962 (m5C1962) of 23S rRNA. The protein is Ribosomal RNA large subunit methyltransferase I of Citrobacter koseri (strain ATCC BAA-895 / CDC 4225-83 / SGSC4696).